The chain runs to 477 residues: Tripartite motif-containing protein 72 (477 aa).

Zn(2+) is bound by residues Cys14, Cys17, Cys29, His31, Cys34, Cys37, Cys53, Cys56, Cys86, His89, Cys97, Asp100, Cys105, Cys108, His114, and His117. Residues 14-57 (CPLCLQLFDAPVTAECGHSFCRACLIRVAGEPADDGTVACPCCQ) form an RING-type zinc finger. The segment at 81-122 (VPQGHCEEHLDPLSIYCEQDRTLVCGVCASLGSHRGHRLLPA) adopts a B box-type zinc-finger fold. Residues 135–232 (QQKAQLQEAC…EKVLEEVADK (98 aa)) are a coiled coil. S-nitrosocysteine is present on Cys144. At Ser255 the chain carries Phosphoserine. The B30.2/SPRY domain occupies 271–475 (DFKFQVWKKM…PLLLVGPDSE (205 aa)).

It belongs to the TRIM/RBCC family. In terms of assembly, homodimer. Homooligomer; disulfide-linked. Oligomerizes on the phospholipid membrane. Interacts with DYSF and CAV3. In terms of processing, disulfide bond formation at Cys-242 occurs in case of membrane damage that cause the entry of the oxidized milieu of the extracellular space, resulting in homooligomerization. S-nitrosylation at Cys-144 stabilizes TRIM72 and protects against oxidation-induced protein degradation and cell death.

The protein localises to the cell membrane. Its subcellular location is the sarcolemma. The protein resides in the cytoplasmic vesicle membrane. It carries out the reaction S-ubiquitinyl-[E2 ubiquitin-conjugating enzyme]-L-cysteine + [acceptor protein]-L-lysine = [E2 ubiquitin-conjugating enzyme]-L-cysteine + N(6)-ubiquitinyl-[acceptor protein]-L-lysine.. It participates in protein modification; protein ubiquitination. With respect to regulation, specifically binds phosphatidylserine. The binding to phospholipids enhances ubiquitination activity. Muscle-specific E3 ubiquitin-protein ligase that plays a central role in cell membrane repair by nucleating the assembly of the repair machinery at injury sites. Its ubiquitination activity is mediated by E2 ubiquitin-conjugating enzymes UBE2D1, UBE2D2 and UBE2D3. Acts as a sensor of oxidation: upon membrane damage, entry of extracellular oxidative environment results in disulfide bond formation and homooligomerization at the injury site. This oligomerization acts as a nucleation site for recruitment of TRIM72-containing vesicles to the injury site, leading to membrane patch formation. Probably acts upstream of the Ca(2+)-dependent membrane resealing process. Required for transport of DYSF to sites of cell injury during repair patch formation. Regulates membrane budding and exocytosis. May be involved in the regulation of the mobility of KCNB1-containing endocytic vesicles. This is Tripartite motif-containing protein 72 from Rattus norvegicus (Rat).